Consider the following 250-residue polypeptide: Octanoyltransferase (250 aa).

In terms of domain architecture, BPL/LPL catalytic spans 44–224 (GAGSDRLLLL…AVVQALNGDL (181 aa)). Substrate is bound by residues 82-89 (RGGKITWH), 154-156 (AIG), and 167-169 (GIS). C185 (acyl-thioester intermediate) is an active-site residue. The segment at 224–250 (LPVRDHDLPRPGTTPAAPNSTRVRSMT) is disordered. Residues 239 to 250 (AAPNSTRVRSMT) are compositionally biased toward polar residues.

The protein belongs to the LipB family.

It localises to the cytoplasm. The enzyme catalyses octanoyl-[ACP] + L-lysyl-[protein] = N(6)-octanoyl-L-lysyl-[protein] + holo-[ACP] + H(+). It participates in protein modification; protein lipoylation via endogenous pathway; protein N(6)-(lipoyl)lysine from octanoyl-[acyl-carrier-protein]: step 1/2. In terms of biological role, catalyzes the transfer of endogenously produced octanoic acid from octanoyl-acyl-carrier-protein onto the lipoyl domains of lipoate-dependent enzymes. Lipoyl-ACP can also act as a substrate although octanoyl-ACP is likely to be the physiological substrate. In Nocardia farcinica (strain IFM 10152), this protein is Octanoyltransferase.